The sequence spans 20 residues: 23 kDa cell wall protein (20 aa).

It is found in the secreted. The protein localises to the cell wall. This is 23 kDa cell wall protein from Arabidopsis thaliana (Mouse-ear cress).